We begin with the raw amino-acid sequence, 320 residues long: Heterogeneous nuclear ribonucleoprotein A1 (320 aa).

N-acetylmethionine is present on Met1. Ser2 carries the post-translational modification N-acetylserine; in Heterogeneous nuclear ribonucleoprotein A1, N-terminally processed. A Phosphoserine modification is found at Ser2. At Lys3 the chain carries N6-acetyllysine; alternate. Residue Lys3 forms a Glycyl lysine isopeptide (Lys-Gly) (interchain with G-Cter in SUMO2); alternate linkage. A phosphoserine mark is found at Ser4 and Ser6. Positions 4–94 (SESPKEPEQL…EPKRAVSRED (91 aa)) are globular A domain. A Glycyl lysine isopeptide (Lys-Gly) (interchain with G-Cter in SUMO2) cross-link involves residue Lys8. 2 consecutive RRM domains span residues 14-97 (RKLF…DSQR) and 105-184 (KKIF…LCKQ). Ser22 carries the post-translational modification Phosphoserine. A Glycyl lysine isopeptide (Lys-Gly) (interchain with G-Cter in SUMO2) cross-link involves residue Lys78. The globular B domain stretch occupies residues 95–185 (SQRPGAHLTV…EVRKALCKQE (91 aa)). Residue Lys113 forms a Glycyl lysine isopeptide (Lys-Gly) (interchain with G-Cter in SUMO) linkage. Residues Lys179 and Lys183 each participate in a glycyl lysine isopeptide (Lys-Gly) (interchain with G-Cter in SUMO2) cross-link. Residues 188–216 (SASSSQRGRSGSGNFGGGRGGGFGGNDNF) form a disordered region. Position 192 is a phosphoserine; by MKNK2 (Ser192). Residue Arg194 is modified to Asymmetric dimethylarginine; alternate. Arg194 is modified (dimethylated arginine; alternate). Arg194 is subject to Omega-N-methylarginine; alternate. Positions 197–216 (SGSGNFGGGRGGGFGGNDNF) are enriched in gly residues. Ser199 carries the post-translational modification Phosphoserine. An asymmetric dimethylarginine; alternate mark is found at Arg206, Arg218, Arg225, and Arg232. Arg206 carries the dimethylated arginine; alternate modification. Arg206, Arg218, Arg225, and Arg232 each carry omega-N-methylarginine; alternate. Residues 218-240 (RGGNFSGRGGFGGSRGGGGYGGS) form an RNA-binding RGG-box region. Arg225 carries the dimethylated arginine; alternate modification. A nuclear targeting sequence region spans residues 268-305 (NQSSNFGPMKGGNFGGRSSGPYGGGGQYFAKPRNQGGY). A disordered region spans residues 271–320 (SNFGPMKGGNFGGRSSGPYGGGGQYFAKPRNQGGYGGSSSSSSYGSGRRF). The span at 276 to 294 (MKGGNFGGRSSGPYGGGGQ) shows a compositional bias: gly residues. The residue at position 284 (Arg284) is an Omega-N-methylarginine. Ser285 is subject to Phosphoserine. Position 298 is an N6-acetyllysine; alternate (Lys298). Lys298 is covalently cross-linked (Glycyl lysine isopeptide (Lys-Gly) (interchain with G-Cter in SUMO2); alternate). Arg300 is subject to Omega-N-methylarginine. Residues 308 to 320 (SSSSSSYGSGRRF) are compositionally biased toward low complexity. Position 309 is a phosphoserine (Ser309). Phosphoserine; by MKNK2 is present on residues Ser310, Ser311, and Ser312. A phosphoserine mark is found at Ser313 and Ser316. At Arg318 the chain carries Omega-N-methylarginine.

As to quaternary structure, identified in the spliceosome C complex. Identified in a IGF2BP1-dependent mRNP granule complex containing untranslated mRNAs. Interacts with SEPT6. Interacts with C9orf72. Interacts with KHDRBS1. Interacts with UBQLN2. Interacts with PPIA/CYPA. Post-translationally, sumoylated.

Its subcellular location is the nucleus. It is found in the cytoplasm. Involved in the packaging of pre-mRNA into hnRNP particles, transport of poly(A) mRNA from the nucleus to the cytoplasm and modulation of splice site selection. Plays a role in the splicing of pyruvate kinase PKM by binding repressively to sequences flanking PKM exon 9, inhibiting exon 9 inclusion and resulting in exon 10 inclusion and production of the PKM M2 isoform. Binds to the IRES and thereby inhibits the translation of the apoptosis protease activating factor APAF1. May bind to specific miRNA hairpins. This chain is Heterogeneous nuclear ribonucleoprotein A1 (Hnrnpa1), found in Rattus norvegicus (Rat).